Here is a 237-residue protein sequence, read N- to C-terminus: uncharacterized protein (237 aa).

7 helical membrane passes run 19–39 (ILNG…GLAW), 51–71 (YDSP…YGLS), 81–101 (IAGV…ASLV), 106–126 (IIIV…AGLL), 136–156 (FIIM…AALM), 159–179 (RPIW…ISHG), and 209–229 (LYYY…TLVW).

The protein resides in the cell membrane. This is an uncharacterized protein from Escherichia coli (strain K12).